We begin with the raw amino-acid sequence, 61 residues long: Myrmicitoxin(1)-Pm5a (61 aa).

A signal peptide spans methionine 1–glycine 23. Residues glutamate 24–serine 33 constitute a propeptide that is removed on maturation. Residue glutamine 60 is modified to Glutamine amide.

Belongs to the formicidae venom clade 2 family. Expressed by the venom gland.

Its subcellular location is the secreted. Its function is as follows. Toxin that causes a rapid and irreversible paralysis when intrathoracically injected into insects (blowflies). Does not cause spontaneous nocifensive behaviors by intraplantar injection in mice. The sequence is that of Myrmicitoxin(1)-Pm5a from Pogonomyrmex maricopa (Maricopa harvester ant).